A 352-amino-acid polypeptide reads, in one-letter code: S-adenosylmethionine:tRNA ribosyltransferase-isomerase (352 aa).

Belongs to the QueA family. Monomer.

The protein resides in the cytoplasm. It catalyses the reaction 7-aminomethyl-7-carbaguanosine(34) in tRNA + S-adenosyl-L-methionine = epoxyqueuosine(34) in tRNA + adenine + L-methionine + 2 H(+). Its pathway is tRNA modification; tRNA-queuosine biosynthesis. Its function is as follows. Transfers and isomerizes the ribose moiety from AdoMet to the 7-aminomethyl group of 7-deazaguanine (preQ1-tRNA) to give epoxyqueuosine (oQ-tRNA). This chain is S-adenosylmethionine:tRNA ribosyltransferase-isomerase, found in Cupriavidus necator (strain ATCC 17699 / DSM 428 / KCTC 22496 / NCIMB 10442 / H16 / Stanier 337) (Ralstonia eutropha).